The following is a 466-amino-acid chain: Eukaryotic translation initiation factor 3 subunit M (466 aa).

The interval 40–62 (EISPLLEPLRQQEQSDAEPDRKQ) is disordered. Residues 211 to 378 (AQTHILQALQ…SEFLVHRATY (168 aa)) form the PCI domain. A disordered region spans residues 424–466 (AAEEAAQGKSNDKGNKSGDRRQRHGNNQQSQQQQQPQEVAAAE). Over residues 433–443 (SNDKGNKSGDR) the composition is skewed to basic and acidic residues. A compositionally biased stretch (low complexity) spans 451 to 460 (QQSQQQQQPQ).

The protein belongs to the eIF-3 subunit M family. In terms of assembly, component of the eukaryotic translation initiation factor 3 (eIF-3) complex.

It localises to the cytoplasm. Functionally, component of the eukaryotic translation initiation factor 3 (eIF-3) complex, which is involved in protein synthesis of a specialized repertoire of mRNAs and, together with other initiation factors, stimulates binding of mRNA and methionyl-tRNAi to the 40S ribosome. The eIF-3 complex specifically targets and initiates translation of a subset of mRNAs involved in cell proliferation. This chain is Eukaryotic translation initiation factor 3 subunit M, found in Aspergillus oryzae (strain ATCC 42149 / RIB 40) (Yellow koji mold).